Consider the following 122-residue polypeptide: Ribonuclease P protein component (122 aa).

It belongs to the RnpA family. As to quaternary structure, consists of a catalytic RNA component (M1 or rnpB) and a protein subunit.

It carries out the reaction Endonucleolytic cleavage of RNA, removing 5'-extranucleotides from tRNA precursor.. In terms of biological role, RNaseP catalyzes the removal of the 5'-leader sequence from pre-tRNA to produce the mature 5'-terminus. It can also cleave other RNA substrates such as 4.5S RNA. The protein component plays an auxiliary but essential role in vivo by binding to the 5'-leader sequence and broadening the substrate specificity of the ribozyme. The chain is Ribonuclease P protein component from Roseiflexus sp. (strain RS-1).